We begin with the raw amino-acid sequence, 470 residues long: PTS system trehalose-specific EIIBC component (470 aa).

Residues 1-88 form the PTS EIIB type-1 domain; the sequence is MGELNKSARQ…VKETGIGEST (88 aa). Catalysis depends on Cys-27, which acts as the Phosphocysteine intermediate; for EIIB activity. Cys-27 carries the phosphocysteine; by EIIA modification. The region spanning 108-470 is the PTS EIIC type-1 domain; that stretch reads KTLADIFIPI…TYAYARFKHK (363 aa). A run of 10 helical transmembrane segments spans residues 110–130, 160–180, 183–203, 234–254, 263–283, 301–321, 326–346, 347–367, 403–423, and 443–463; these read LADIFIPILPAIVTAGLLMGI, INLIAGTAFTFLPALIGWSAV, FGGNPLLGIVLGVMLVHPDLL, GQVLPILLASYMLAKIEVFLT, LLVVAPITLLLTGFASFIIIG, FGSFAALGGLLYGGFYSALVI, HTFLAVDLQLIGSKLGGTFLW, PMLALSNIAQGSAALAMMFIV, FIIAMVSSGLAGMYISSQGVL, and WGAFAIGMAIVLIVPFAGTYA.

The protein localises to the cell membrane. It carries out the reaction alpha,alpha-trehalose(out) + N(pros)-phospho-L-histidyl-[protein] = alpha,alpha-trehalose 6-phosphate(in) + L-histidyl-[protein]. Its function is as follows. The phosphoenolpyruvate-dependent sugar phosphotransferase system (sugar PTS), a major carbohydrate active transport system, catalyzes the phosphorylation of incoming sugar substrates concomitantly with their translocation across the cell membrane. This system is involved in trehalose transport. This chain is PTS system trehalose-specific EIIBC component (treP), found in Bacillus subtilis (strain 168).